Reading from the N-terminus, the 431-residue chain is Glucose-1-phosphate adenylyltransferase (431 aa).

Residues Y109, G175, 190–191 (EK), and S208 contribute to the alpha-D-glucose 1-phosphate site.

It belongs to the bacterial/plant glucose-1-phosphate adenylyltransferase family. In terms of assembly, homotetramer.

The enzyme catalyses alpha-D-glucose 1-phosphate + ATP + H(+) = ADP-alpha-D-glucose + diphosphate. It participates in glycan biosynthesis; glycogen biosynthesis. Involved in the biosynthesis of ADP-glucose, a building block required for the elongation reactions to produce glycogen. Catalyzes the reaction between ATP and alpha-D-glucose 1-phosphate (G1P) to produce pyrophosphate and ADP-Glc. The sequence is that of Glucose-1-phosphate adenylyltransferase from Alteromonas mediterranea (strain DSM 17117 / CIP 110805 / LMG 28347 / Deep ecotype).